A 171-amino-acid polypeptide reads, in one-letter code: Skp-like protein (171 aa).

Positions 1–21 (MKKLLFSTFLLVLGSTSAAHA) are cleaved as a signal peptide.

The protein belongs to the Skp family.

The chain is Skp-like protein from Chlamydia pneumoniae (Chlamydophila pneumoniae).